The chain runs to 530 residues: Glucose-6-phosphate isomerase (530 aa).

The Proton donor role is filled by glutamate 322. Residues histidine 351 and lysine 455 contribute to the active site.

It belongs to the GPI family.

The protein localises to the cytoplasm. The enzyme catalyses alpha-D-glucose 6-phosphate = beta-D-fructose 6-phosphate. It participates in carbohydrate biosynthesis; gluconeogenesis. Its pathway is carbohydrate degradation; glycolysis; D-glyceraldehyde 3-phosphate and glycerone phosphate from D-glucose: step 2/4. Functionally, catalyzes the reversible isomerization of glucose-6-phosphate to fructose-6-phosphate. The polypeptide is Glucose-6-phosphate isomerase (Citrifermentans bemidjiense (strain ATCC BAA-1014 / DSM 16622 / JCM 12645 / Bem) (Geobacter bemidjiensis)).